The sequence spans 139 residues: Large ribosomal subunit protein uL22 (139 aa).

Residues 118 to 139 (VEVESRPKKVASKSKSQKGSAR) are disordered. The segment covering 125–139 (KKVASKSKSQKGSAR) has biased composition (basic residues).

It belongs to the universal ribosomal protein uL22 family. Part of the 50S ribosomal subunit.

Functionally, this protein binds specifically to 23S rRNA; its binding is stimulated by other ribosomal proteins, e.g. L4, L17, and L20. It is important during the early stages of 50S assembly. It makes multiple contacts with different domains of the 23S rRNA in the assembled 50S subunit and ribosome. Its function is as follows. The globular domain of the protein is located near the polypeptide exit tunnel on the outside of the subunit, while an extended beta-hairpin is found that lines the wall of the exit tunnel in the center of the 70S ribosome. The chain is Large ribosomal subunit protein uL22 from Saccharopolyspora erythraea (strain ATCC 11635 / DSM 40517 / JCM 4748 / NBRC 13426 / NCIMB 8594 / NRRL 2338).